We begin with the raw amino-acid sequence, 499 residues long: MADNKSTLPGLPDINGTLNRSMTPNTGWEGPYDMSVHLHWTQFPPVTEEWHYIIGVYITIVGLLGIMGNTTVVYIFSNTKSLRSPSNLFVVNLAVSDLIFSAVNGFPLLTVSSFHQKWIFGSLFCQLYGFVGGVFGLMSINTLTAISIDRYVVITKPLQASQTMTRRKVHLMIVIVWVLSILLSIPPFFGWGAYIPEGFQTSCTFDYLTKTARTRTYIVVLYLFGFLIPLIIIGVCYVLIIRGVRRHDQKMLTITRSMKTEDARANNKRARSELRISKIAMTVTCLFIISWSPYAIIALIAQFGPAHWITPLVSELPMMLAKSSSMHNPVVYALSHPKFRKALYQRVPWLFCCCKPKEKADFRTSVCSKRSVTRTESVNSDVSSVISNLSDSTTTLGLTSEGATRANRETSFRRSVSIIKGDEDPCTHPDTFLLAYKEVEVGNLFDMTDDQNRRDSNLHSLYIPTRVQHRPTTQSLGTTPGGVYIVDNGQRVNGLTFNS.

The Extracellular segment spans residues 1-50; the sequence is MADNKSTLPGLPDINGTLNRSMTPNTGWEGPYDMSVHLHWTQFPPVTEEW. Residues Asn4, Asn15, and Asn19 are each glycosylated (N-linked (GlcNAc...) asparagine). The chain crosses the membrane as a helical span at residues 51 to 75; sequence HYIIGVYITIVGLLGIMGNTTVVYI. The Cytoplasmic portion of the chain corresponds to 76–87; it reads FSNTKSLRSPSN. Residues 88–114 form a helical membrane-spanning segment; the sequence is LFVVNLAVSDLIFSAVNGFPLLTVSSF. Residues 115–128 are Extracellular-facing; the sequence is HQKWIFGSLFCQLY. A disulfide bond links Cys125 and Cys203. The helical transmembrane segment at 129–148 threads the bilayer; that stretch reads GFVGGVFGLMSINTLTAISI. Residues 149–168 are Cytoplasmic-facing; sequence DRYVVITKPLQASQTMTRRK. The helical transmembrane segment at 169 to 192 threads the bilayer; that stretch reads VHLMIVIVWVLSILLSIPPFFGWG. Over 193 to 216 the chain is Extracellular; the sequence is AYIPEGFQTSCTFDYLTKTARTRT. Residues 217-244 traverse the membrane as a helical segment; that stretch reads YIVVLYLFGFLIPLIIIGVCYVLIIRGV. Residues 245–278 lie on the Cytoplasmic side of the membrane; sequence RRHDQKMLTITRSMKTEDARANNKRARSELRISK. A helical transmembrane segment spans residues 279–302; that stretch reads IAMTVTCLFIISWSPYAIIALIAQ. The Extracellular portion of the chain corresponds to 303-310; the sequence is FGPAHWIT. A helical membrane pass occupies residues 311–335; sequence PLVSELPMMLAKSSSMHNPVVYALS. Lys322 is subject to N6-(retinylidene)lysine. Over 336-499 the chain is Cytoplasmic; sequence HPKFRKALYQ…QRVNGLTFNS (164 aa). 2 S-palmitoyl cysteine lipidation sites follow: Cys353 and Cys354.

Belongs to the G-protein coupled receptor 1 family. Opsin subfamily. In terms of processing, phosphorylated on some or all of the serine and threonine residues present in the C-terminal region. In terms of tissue distribution, retina. Expressed in the depolarizing cell layer of the photoreceptor cells distant from the lens.

Its subcellular location is the membrane. In terms of biological role, visual pigments such as rhodopsin and porphyropsin are light-absorbing molecules that mediate vision. Rhodopsin consists of an apoprotein, opsin, covalently linked to 11-cis-retinal. This receptor is coupled to the activation of phospholipase C. Porphyropsin consists of opsin covalently linked to 11-cis 3,4-didehydroretinal. This is Rhodopsin, GQ-coupled (SCOP1) from Mizuhopecten yessoensis (Japanese scallop).